A 410-amino-acid chain; its full sequence is Adenosylhomocysteinase (410 aa).

Aspartate 117 and glutamate 142 together coordinate substrate. Position 143–145 (threonine 143–threonine 145) interacts with NAD(+). Substrate contacts are provided by lysine 172 and aspartate 176. NAD(+) contacts are provided by residues asparagine 177, glycine 206–glycine 211, glutamate 229, alanine 285–histidine 287, and asparagine 332.

It belongs to the adenosylhomocysteinase family. NAD(+) is required as a cofactor.

It localises to the cytoplasm. The catalysed reaction is S-adenosyl-L-homocysteine + H2O = L-homocysteine + adenosine. The protein operates within amino-acid biosynthesis; L-homocysteine biosynthesis; L-homocysteine from S-adenosyl-L-homocysteine: step 1/1. In terms of biological role, may play a key role in the regulation of the intracellular concentration of adenosylhomocysteine. The chain is Adenosylhomocysteinase from Thermoplasma acidophilum (strain ATCC 25905 / DSM 1728 / JCM 9062 / NBRC 15155 / AMRC-C165).